Consider the following 333-residue polypeptide: UDP-N-acetylglucosamine--N-acetylmuramyl-(pentapeptide) pyrophosphoryl-undecaprenol N-acetylglucosamine transferase (333 aa).

UDP-N-acetyl-alpha-D-glucosamine contacts are provided by residues 10-12 (TGG), asparagine 124, serine 177, and glutamine 275.

The protein belongs to the glycosyltransferase 28 family. MurG subfamily.

It is found in the cell inner membrane. It carries out the reaction di-trans,octa-cis-undecaprenyl diphospho-N-acetyl-alpha-D-muramoyl-L-alanyl-D-glutamyl-meso-2,6-diaminopimeloyl-D-alanyl-D-alanine + UDP-N-acetyl-alpha-D-glucosamine = di-trans,octa-cis-undecaprenyl diphospho-[N-acetyl-alpha-D-glucosaminyl-(1-&gt;4)]-N-acetyl-alpha-D-muramoyl-L-alanyl-D-glutamyl-meso-2,6-diaminopimeloyl-D-alanyl-D-alanine + UDP + H(+). It functions in the pathway cell wall biogenesis; peptidoglycan biosynthesis. Cell wall formation. Catalyzes the transfer of a GlcNAc subunit on undecaprenyl-pyrophosphoryl-MurNAc-pentapeptide (lipid intermediate I) to form undecaprenyl-pyrophosphoryl-MurNAc-(pentapeptide)GlcNAc (lipid intermediate II). The protein is UDP-N-acetylglucosamine--N-acetylmuramyl-(pentapeptide) pyrophosphoryl-undecaprenol N-acetylglucosamine transferase of Nitratiruptor sp. (strain SB155-2).